The sequence spans 720 residues: DNA gyrase subunit B (720 aa).

The span at 1-26 (MVDAMPENPAEEPTAASAAPNPEAVP) shows a compositional bias: low complexity. The interval 1–42 (MVDAMPENPAEEPTAASAAPNPEAVPDAVGQPEAPVKDRKVP) is disordered. One can recognise a Toprim domain in the interval 498–612 (CEVYIVEGDS…AGHVFLAQPP (115 aa)). Mg(2+) is bound by residues glutamate 504, aspartate 577, and aspartate 579.

Belongs to the type II topoisomerase GyrB family. Heterotetramer, composed of two GyrA and two GyrB chains. In the heterotetramer, GyrA contains the active site tyrosine that forms a transient covalent intermediate with the DNA, while GyrB binds cofactors and catalyzes ATP hydrolysis. Mg(2+) is required as a cofactor. Requires Mn(2+) as cofactor. Ca(2+) serves as cofactor.

Its subcellular location is the cytoplasm. It catalyses the reaction ATP-dependent breakage, passage and rejoining of double-stranded DNA.. With respect to regulation, supercoiling activity inhibited by novobiocin and coumermycin, DNA wrapping around gyrase is not inhibited. Functionally, a type II topoisomerase that negatively supercoils DNA in an ATP-dependent manner. About 140 bp of DNA wraps around gyrase in the presence or absence of ATP, when ATP is added negative supercoils are made. Its function is as follows. A type II topoisomerase that negatively supercoils closed circular double-stranded (ds) DNA in an ATP-dependent manner to modulate DNA topology and maintain chromosomes in an underwound state. Negative supercoiling favors strand separation, and DNA replication, transcription, recombination and repair, all of which involve strand separation. Also able to catalyze the interconversion of other topological isomers of dsDNA rings, including catenanes and knotted rings. Type II topoisomerases break and join 2 DNA strands simultaneously in an ATP-dependent manner. This chain is DNA gyrase subunit B, found in Micrococcus luteus (strain ATCC 4698 / DSM 20030 / JCM 1464 / CCM 169 / CCUG 5858 / IAM 1056 / NBRC 3333 / NCIMB 9278 / NCTC 2665 / VKM Ac-2230) (Micrococcus lysodeikticus).